Consider the following 823-residue polypeptide: Axial budding pattern protein 2 (823 aa).

A signal peptide spans 1–22 (MTQLQISLLLTATISLLHLVVA). The Extracellular portion of the chain corresponds to 23 to 508 (TPYEAYPIGK…SHNKKAVAIA (486 aa)). N-linked (GlcNAc...) asparagine glycans are attached at residues Asn-41, Asn-50, Asn-96, Asn-117, Asn-163, Asn-260, Asn-266, Asn-304, Asn-324, Asn-359, Asn-382, Asn-389, Asn-403, Asn-447, Asn-451, and Asn-495. The tract at residues 447-467 (NHSANATSTRSSHHSTSTSSY) is disordered. Positions 449 to 467 (SANATSTRSSHHSTSTSSY) are enriched in low complexity. Residues 509-529 (CGVAIPLGVILVALICFLIFW) form a helical membrane-spanning segment. The Cytoplasmic segment spans residues 530–823 (RRRRENPDDE…DIHGRIPEML (294 aa)). Disordered regions lie at residues 539-576 (ENLP…ASSY) and 596-627 (HSAT…QSQS). 2 stretches are compositionally biased toward polar residues: residues 552–566 (NPAN…TPLN) and 614–626 (SGMN…FQSQ). Ser-642, Ser-673, and Ser-676 each carry phosphoserine. 2 disordered regions span residues 700-734 (PEKE…VTPS) and 751-771 (DSQS…SSDD). Residues 709 to 724 (DVTMSSLDPWNSNISP) are compositionally biased toward polar residues. The span at 760–769 (TPTTMSTSSS) shows a compositional bias: low complexity.

As to quaternary structure, interacts with BEM1, BUD3, BUD4, BUD5, CDC24 and CDC42. In terms of processing, O-glycosylated by PMT4 and N-glycosylated. O-glycosylation increases activity in daughter cells by enhancing stability and promoting localization to the plasma membrane. May also be O-glycosylated by PMT1 and PMT2.

It is found in the cell membrane. In terms of biological role, required for haploid cells axial budding pattern. Acts as an anchor to help direct new growth components and/or polarity establishment components like the BUD5 GTP/GDP exchange factor to localize at the cortical axial budding site. Regulates septin organization in late G1 independently of its role in polarity-axis determination. This chain is Axial budding pattern protein 2 (AXL2), found in Saccharomyces cerevisiae (strain ATCC 204508 / S288c) (Baker's yeast).